Here is a 1256-residue protein sequence, read N- to C-terminus: Bifunctional autolysin (1256 aa).

The N-terminal stretch at 1–29 (MAKKFNYKLPSMVALTLVGSAVTAHQVQA) is a signal peptide. Positions 103 to 138 (GDTRANQSATTNNTQPVAKSTSTTAPKTNTNVTNAG) are enriched in polar residues. Disordered stretches follow at residues 103–151 (GDTR…NSEN), 172–219 (KTAA…KYKP), and 419–440 (TQST…PSTG). 2 stretches are compositionally biased toward low complexity: residues 172 to 196 (KTAA…KVTT) and 421 to 439 (STTT…KPST). Positions 199–775 (ASAQPRSVAA…AVAQPKTAVK (577 aa)) are N-acetylmuramoyl-L-alanine amidase. GW domains are found at residues 443 to 517 (TVAA…YNTA), 519 to 593 (SPVN…DTAK), 612 to 686 (TVSS…YNNA), 688 to 762 (SPVN…VPAA), 784 to 859 (TTQT…VQNL), 861 to 936 (KEVK…APTA), and 943 to 1017 (AAKD…KELI). An endo-beta-N-acetylglucosaminidase region spans residues 776–1256 (AYTVTKPQTT…GKYFDIPQYK (481 aa)).

In the N-terminal section; belongs to the N-acetylmuramoyl-L-alanine amidase 2 family. The protein in the C-terminal section; belongs to the glycosyl hydrolase 73 family. Oligomer; forms a ring structure at the cell surface which is important for efficient partitioning of daughter cells after cell division. Undergoes proteolytic processing to generate the two extracellular lytic enzymes, probably at the septal region on the cell surface.

The protein resides in the secreted. It catalyses the reaction Hydrolyzes the link between N-acetylmuramoyl residues and L-amino acid residues in certain cell-wall glycopeptides.. It carries out the reaction an N(4)-(oligosaccharide-(1-&gt;3)-[oligosaccharide-(1-&gt;6)]-beta-D-Man-(1-&gt;4)-beta-D-GlcNAc-(1-&gt;4)-alpha-D-GlcNAc)-L-asparaginyl-[protein] + H2O = an oligosaccharide-(1-&gt;3)-[oligosaccharide-(1-&gt;6)]-beta-D-Man-(1-&gt;4)-D-GlcNAc + N(4)-(N-acetyl-beta-D-glucosaminyl)-L-asparaginyl-[protein]. Endohydrolysis of the di-N-acetylchitobiosyl unit in high-mannose glycopeptides and glycoproteins containing the -[(Man)5(GlcNAc)2]-Asn structure. One N-acetyl-D-glucosamine residue remains attached to the protein; the rest of the oligosaccharide is released intact. Cleaves the peptidoglycan connecting the daughter cells at the end of the cell division cycle, resulting in the separation of the two newly divided cells. Acts as an autolysin in penicillin-induced lysis. The polypeptide is Bifunctional autolysin (atl) (Staphylococcus aureus (strain COL)).